A 134-amino-acid chain; its full sequence is Arginine decarboxylase proenzyme (134 aa).

S82 serves as the catalytic Schiff-base intermediate with substrate; via pyruvic acid. The residue at position 82 (S82) is a Pyruvic acid (Ser); by autocatalysis. The Proton acceptor; for processing activity role is filled by H87. C102 serves as the catalytic Proton donor; for catalytic activity.

This sequence belongs to the prokaryotic AdoMetDC family. Type 1 subfamily. In terms of assembly, heterooctamer of four alpha and four beta chains arranged as a tetramer of alpha/beta heterodimers. It depends on pyruvate as a cofactor. Is synthesized initially as an inactive proenzyme. Formation of the active enzyme involves a self-maturation process in which the active site pyruvoyl group is generated from an internal serine residue via an autocatalytic post-translational modification. Two non-identical subunits are generated from the proenzyme in this reaction, and the pyruvate is formed at the N-terminus of the alpha chain, which is derived from the carboxyl end of the proenzyme. The post-translation cleavage follows an unusual pathway, termed non-hydrolytic serinolysis, in which the side chain hydroxyl group of the serine supplies its oxygen atom to form the C-terminus of the beta chain, while the remainder of the serine residue undergoes an oxidative deamination to produce ammonia and the pyruvoyl group blocking the N-terminus of the alpha chain.

It catalyses the reaction L-arginine + H(+) = agmatine + CO2. Its pathway is amine and polyamine biosynthesis; agmatine biosynthesis; agmatine from L-arginine: step 1/1. In terms of biological role, specifically catalyzes the decarboxylation of L-arginine to agmatine. Has no S-adenosylmethionine decarboxylase (AdoMetDC) activity. The chain is Arginine decarboxylase proenzyme from Caldivirga maquilingensis (strain ATCC 700844 / DSM 13496 / JCM 10307 / IC-167).